The sequence spans 496 residues: Costunolide synthase (496 aa).

The helical; Signal-anchor for type II membrane protein transmembrane segment at 4 to 24 (FTIFSLVVASLVFFACWALVA) threads the bilayer. Residues Asn-26, Asn-168, Asn-280, and Asn-412 are each glycosylated (N-linked (GlcNAc...) asparagine). Heme is bound at residue Cys-434.

This sequence belongs to the cytochrome P450 family. Requires heme as cofactor. Expressed in floral glandular trichomes.

Its subcellular location is the membrane. The catalysed reaction is germacra-1(10),4,11(13)-trien-12-oate + reduced [NADPH--hemoprotein reductase] + O2 = (+)-costunolide + oxidized [NADPH--hemoprotein reductase] + 2 H2O. The protein operates within secondary metabolite biosynthesis; terpenoid biosynthesis. In terms of biological role, involved in the biosynthesis of germacrene-derived sesquiterpene lactones. Component of the parthenolide biosynthetic pathway; parthenolide and conjugates are promising anti-cancer drugs highly active against colon cancer cells. Hydroxylates germacrene A acid to 6-alpha-hydroxy-germacrene A acid, a precursor of sesquiterpene lactones that spontaneously undergoes a lactonization which yields costunolide. The protein is Costunolide synthase of Tanacetum parthenium (Feverfew).